Reading from the N-terminus, the 322-residue chain is Ribosomal RNA small subunit methyltransferase H (322 aa).

S-adenosyl-L-methionine-binding positions include 35-37 (GGY), D52, F79, D100, and Q107. Positions 254–322 (GATPAGSRHL…TAPKKEGRQG (69 aa)) are disordered. The span at 295–309 (SRSATLRVARRTAAA) shows a compositional bias: low complexity.

The protein belongs to the methyltransferase superfamily. RsmH family.

The protein localises to the cytoplasm. It catalyses the reaction cytidine(1402) in 16S rRNA + S-adenosyl-L-methionine = N(4)-methylcytidine(1402) in 16S rRNA + S-adenosyl-L-homocysteine + H(+). Functionally, specifically methylates the N4 position of cytidine in position 1402 (C1402) of 16S rRNA. In Rhizorhabdus wittichii (strain DSM 6014 / CCUG 31198 / JCM 15750 / NBRC 105917 / EY 4224 / RW1) (Sphingomonas wittichii), this protein is Ribosomal RNA small subunit methyltransferase H.